The chain runs to 293 residues: Elongation factor Ts (293 aa).

The involved in Mg(2+) ion dislocation from EF-Tu stretch occupies residues 80-83 (TDFV).

The protein belongs to the EF-Ts family.

It is found in the cytoplasm. In terms of biological role, associates with the EF-Tu.GDP complex and induces the exchange of GDP to GTP. It remains bound to the aminoacyl-tRNA.EF-Tu.GTP complex up to the GTP hydrolysis stage on the ribosome. In Lacticaseibacillus casei (strain BL23) (Lactobacillus casei), this protein is Elongation factor Ts.